The following is a 289-amino-acid chain: ATP synthase subunit a (289 aa).

The next 6 membrane-spanning stretches (helical) occupy residues 43-63 (AFHL…VLIF), 104-124 (IAPL…VDLI), 160-180 (LSVF…GGFI), 193-213 (IFVQ…TLIA), 232-252 (VFIL…GLGV), and 259-279 (AVFH…LTIV).

Belongs to the ATPase A chain family. As to quaternary structure, F-type ATPases have 2 components, CF(1) - the catalytic core - and CF(0) - the membrane proton channel. CF(1) has five subunits: alpha(3), beta(3), gamma(1), delta(1), epsilon(1). CF(0) has three main subunits: a(1), b(2) and c(9-12). The alpha and beta chains form an alternating ring which encloses part of the gamma chain. CF(1) is attached to CF(0) by a central stalk formed by the gamma and epsilon chains, while a peripheral stalk is formed by the delta and b chains.

It localises to the cell inner membrane. Functionally, key component of the proton channel; it plays a direct role in the translocation of protons across the membrane. This is ATP synthase subunit a from Pseudomonas fluorescens (strain SBW25).